The following is a 299-amino-acid chain: tRNA dimethylallyltransferase (299 aa).

Residue 10–17 (GPTAVGKT) coordinates ATP. 12–17 (TAVGKT) lines the substrate pocket. The interaction with substrate tRNA stretch occupies residues 35 to 38 (DSQQ).

It belongs to the IPP transferase family. As to quaternary structure, monomer. The cofactor is Mg(2+).

It catalyses the reaction adenosine(37) in tRNA + dimethylallyl diphosphate = N(6)-dimethylallyladenosine(37) in tRNA + diphosphate. In terms of biological role, catalyzes the transfer of a dimethylallyl group onto the adenine at position 37 in tRNAs that read codons beginning with uridine, leading to the formation of N6-(dimethylallyl)adenosine (i(6)A). This chain is tRNA dimethylallyltransferase, found in Streptococcus thermophilus (strain ATCC BAA-250 / LMG 18311).